The chain runs to 70 residues: Large ribosomal subunit protein bL31 (70 aa).

The Zn(2+) site is built by Cys16, Cys18, Cys38, and Cys41.

Belongs to the bacterial ribosomal protein bL31 family. Type A subfamily. Part of the 50S ribosomal subunit. Zn(2+) serves as cofactor.

In terms of biological role, binds the 23S rRNA. The protein is Large ribosomal subunit protein bL31 of Mycolicibacterium gilvum (strain PYR-GCK) (Mycobacterium gilvum (strain PYR-GCK)).